The primary structure comprises 336 residues: Biotin synthase (336 aa).

Residues Val-48–Arg-277 enclose the Radical SAM core domain. 3 residues coordinate [4Fe-4S] cluster: Cys-66, Cys-70, and Cys-73. [2Fe-2S] cluster is bound by residues Cys-110, Cys-142, Cys-202, and Arg-272.

Belongs to the radical SAM superfamily. Biotin synthase family. In terms of assembly, homodimer. [4Fe-4S] cluster serves as cofactor. The cofactor is [2Fe-2S] cluster.

It catalyses the reaction (4R,5S)-dethiobiotin + (sulfur carrier)-SH + 2 reduced [2Fe-2S]-[ferredoxin] + 2 S-adenosyl-L-methionine = (sulfur carrier)-H + biotin + 2 5'-deoxyadenosine + 2 L-methionine + 2 oxidized [2Fe-2S]-[ferredoxin]. The protein operates within cofactor biosynthesis; biotin biosynthesis; biotin from 7,8-diaminononanoate: step 2/2. In terms of biological role, catalyzes the conversion of dethiobiotin (DTB) to biotin by the insertion of a sulfur atom into dethiobiotin via a radical-based mechanism. The protein is Biotin synthase of Persephonella marina (strain DSM 14350 / EX-H1).